A 101-amino-acid chain; its full sequence is Precursor of CEP6 (101 aa).

A signal peptide spans methionine 1–alanine 26. The propeptide occupies arginine 27–aspartate 48. Over residues leucine 29–phenylalanine 42 the composition is skewed to basic and acidic residues. The tract at residues leucine 29–alanine 101 is disordered. Proline 52, proline 55, and proline 59 each carry hydroxyproline. Residues lysine 64–aspartate 77 constitute a propeptide that is removed on maturation. Residues lysine 64 to phenylalanine 79 show a composition bias toward basic and acidic residues. Residues proline 81, proline 84, and proline 88 each carry the hydroxyproline modification. A propeptide spanning residues alanine 93–alanine 101 is cleaved from the precursor.

The protein belongs to the C-terminally encoded plant signaling peptide (CEP) family. As to quaternary structure, interacts with CEP receptors (e.g. CEPR1 and CEPR2). In terms of processing, the mature small signaling peptide is generated by proteolytic processing of the longer precursor. Expressed in lateral root primordia and in lateral roots excluding the meristem region. Also present in the aerial tissues, such as leaf petioles and the shoot apex region.

The protein localises to the secreted. The protein resides in the extracellular space. It is found in the apoplast. Extracellular signaling peptide that represses primary root growth rate. Modulates leaf morphology. Regulates systemic nitrogen (N)-demand signaling. Mediates up-regulation of genes involved in N uptake and assimilation pathways. The chain is Precursor of CEP6 from Arabidopsis thaliana (Mouse-ear cress).